The primary structure comprises 227 residues: MAAQRPLRVLCLAGFRQSERGFREKTGALRKALRGRAELVCLSGPHPVPDPPGPEGARSDFGSCPPEEQPRGWWFSEQEADVFSALEEPAVCRGLEESLGMVAQALNRLGPFDGLLGFSQGAALAALVCALGQAGDPRFPLPRFILLVSGFCPRGIGFKESILQRPLSLPSLHVFGDTDKVIPSQESVQLASQFPGAITLTHSGGHFIPAAAPQRQAYLKFLDQFAE.

The interval 44–68 (GPHPVPDPPGPEGARSDFGSCPPEE) is disordered. Active-site charge relay system residues include Ser119, Asp179, and His206.

It belongs to the LovG family. Post-translationally, proteolytically degraded in response to RA and 4HPR treatment in a time- and dose-dependent manner in the promyelocytic leukemia cell line HL-60. Ubiquitously expressed.

It carries out the reaction a carboxylic ester + H2O = an alcohol + a carboxylate + H(+). Exhibits ester hydrolase activity with a strong preference for long-chain alkyl ester substrates and high selectivity against a variety of short, branched, and substituted esters. Is able to hydrolyze ester bonds within a wide range of p-nitrophenyl derivatives (C2-C14) in vitro, with a strong preference toward substrates of &gt;8 carbons. This chain is Esterase OVCA2, found in Homo sapiens (Human).